Here is a 350-residue protein sequence, read N- to C-terminus: Dihydroorotase (350 aa).

Residues histidine 17 and histidine 19 each coordinate Zn(2+). Substrate contacts are provided by residues histidine 19–arginine 21 and asparagine 45. Zn(2+) contacts are provided by lysine 103, histidine 140, and histidine 178. At lysine 103 the chain carries N6-carboxylysine. Histidine 140 contributes to the substrate binding site. Leucine 223 is a substrate binding site. Aspartate 251 is a binding site for Zn(2+). The active site involves aspartate 251. Substrate contacts are provided by histidine 255 and alanine 267.

It belongs to the metallo-dependent hydrolases superfamily. DHOase family. Class II DHOase subfamily. As to quaternary structure, homodimer. Requires Zn(2+) as cofactor.

It carries out the reaction (S)-dihydroorotate + H2O = N-carbamoyl-L-aspartate + H(+). Its pathway is pyrimidine metabolism; UMP biosynthesis via de novo pathway; (S)-dihydroorotate from bicarbonate: step 3/3. Functionally, catalyzes the reversible cyclization of carbamoyl aspartate to dihydroorotate. This is Dihydroorotase from Photorhabdus laumondii subsp. laumondii (strain DSM 15139 / CIP 105565 / TT01) (Photorhabdus luminescens subsp. laumondii).